We begin with the raw amino-acid sequence, 567 residues long: Urease subunit alpha (567 aa).

One can recognise a Urease domain in the interval 129-567; that stretch reads GGIDSHIHFI…LPMAQRYFLF (439 aa). Residues His-134, His-136, and Lys-217 each coordinate Ni(2+). N6-carboxylysine is present on Lys-217. Residue His-219 coordinates substrate. Positions 246 and 272 each coordinate Ni(2+). His-320 (proton donor) is an active-site residue. Asp-360 contacts Ni(2+).

It belongs to the metallo-dependent hydrolases superfamily. Urease alpha subunit family. As to quaternary structure, heterotrimer of UreA (gamma), UreB (beta) and UreC (alpha) subunits. Three heterotrimers associate to form the active enzyme. It depends on Ni cation as a cofactor. Post-translationally, carboxylation allows a single lysine to coordinate two nickel ions.

Its subcellular location is the cytoplasm. The catalysed reaction is urea + 2 H2O + H(+) = hydrogencarbonate + 2 NH4(+). The protein operates within nitrogen metabolism; urea degradation; CO(2) and NH(3) from urea (urease route): step 1/1. In Tolumonas auensis (strain DSM 9187 / NBRC 110442 / TA 4), this protein is Urease subunit alpha.